The sequence spans 291 residues: 2-C-methyl-D-erythritol 4-phosphate cytidylyltransferase (291 aa).

The interval 1-23 (MTERDFDTPVETPTVQPAPAQGA) is disordered.

It belongs to the IspD/TarI cytidylyltransferase family. IspD subfamily.

The enzyme catalyses 2-C-methyl-D-erythritol 4-phosphate + CTP + H(+) = 4-CDP-2-C-methyl-D-erythritol + diphosphate. The protein operates within isoprenoid biosynthesis; isopentenyl diphosphate biosynthesis via DXP pathway; isopentenyl diphosphate from 1-deoxy-D-xylulose 5-phosphate: step 2/6. Catalyzes the formation of 4-diphosphocytidyl-2-C-methyl-D-erythritol from CTP and 2-C-methyl-D-erythritol 4-phosphate (MEP). This Bifidobacterium longum (strain DJO10A) protein is 2-C-methyl-D-erythritol 4-phosphate cytidylyltransferase.